A 177-amino-acid chain; its full sequence is ATP synthase subunit b (177 aa).

A helical membrane pass occupies residues L19–I39.

It belongs to the ATPase B chain family. In terms of assembly, F-type ATPases have 2 components, F(1) - the catalytic core - and F(0) - the membrane proton channel. F(1) has five subunits: alpha(3), beta(3), gamma(1), delta(1), epsilon(1). F(0) has three main subunits: a(1), b(2) and c(10-14). The alpha and beta chains form an alternating ring which encloses part of the gamma chain. F(1) is attached to F(0) by a central stalk formed by the gamma and epsilon chains, while a peripheral stalk is formed by the delta and b chains.

It is found in the cell membrane. In terms of biological role, f(1)F(0) ATP synthase produces ATP from ADP in the presence of a proton or sodium gradient. F-type ATPases consist of two structural domains, F(1) containing the extramembraneous catalytic core and F(0) containing the membrane proton channel, linked together by a central stalk and a peripheral stalk. During catalysis, ATP synthesis in the catalytic domain of F(1) is coupled via a rotary mechanism of the central stalk subunits to proton translocation. Functionally, component of the F(0) channel, it forms part of the peripheral stalk, linking F(1) to F(0). This is ATP synthase subunit b from Mesoplasma florum (strain ATCC 33453 / NBRC 100688 / NCTC 11704 / L1) (Acholeplasma florum).